Reading from the N-terminus, the 167-residue chain is Crossover junction endodeoxyribonuclease RuvC (167 aa).

Catalysis depends on residues aspartate 14, glutamate 75, and aspartate 147. Mg(2+)-binding residues include aspartate 14, glutamate 75, and aspartate 147.

Belongs to the RuvC family. In terms of assembly, homodimer which binds Holliday junction (HJ) DNA. The HJ becomes 2-fold symmetrical on binding to RuvC with unstacked arms; it has a different conformation from HJ DNA in complex with RuvA. In the full resolvosome a probable DNA-RuvA(4)-RuvB(12)-RuvC(2) complex forms which resolves the HJ. It depends on Mg(2+) as a cofactor.

It is found in the cytoplasm. It catalyses the reaction Endonucleolytic cleavage at a junction such as a reciprocal single-stranded crossover between two homologous DNA duplexes (Holliday junction).. Functionally, the RuvA-RuvB-RuvC complex processes Holliday junction (HJ) DNA during genetic recombination and DNA repair. Endonuclease that resolves HJ intermediates. Cleaves cruciform DNA by making single-stranded nicks across the HJ at symmetrical positions within the homologous arms, yielding a 5'-phosphate and a 3'-hydroxyl group; requires a central core of homology in the junction. The consensus cleavage sequence is 5'-(A/T)TT(C/G)-3'. Cleavage occurs on the 3'-side of the TT dinucleotide at the point of strand exchange. HJ branch migration catalyzed by RuvA-RuvB allows RuvC to scan DNA until it finds its consensus sequence, where it cleaves and resolves the cruciform DNA. The protein is Crossover junction endodeoxyribonuclease RuvC of Synechocystis sp. (strain ATCC 27184 / PCC 6803 / Kazusa).